A 309-amino-acid polypeptide reads, in one-letter code: Voltage-dependent anion channel-forming protein mll4386 (309 aa).

The next 3 helical transmembrane spans lie at 32-52 (ILPQIFGFAVYSAVILALARW), 58-78 (GVFNITPFGLVGVTLSIYLSF), and 227-247 (IVCLLLPIGLISTTGWATPLF).

It belongs to the anion channel-forming bestrophin (TC 1.A.46) family.

It is found in the cell membrane. This chain is Voltage-dependent anion channel-forming protein mll4386, found in Mesorhizobium japonicum (strain LMG 29417 / CECT 9101 / MAFF 303099) (Mesorhizobium loti (strain MAFF 303099)).